We begin with the raw amino-acid sequence, 424 residues long: tRNA(Met) cytidine acetate ligase (424 aa).

ATP is bound by residues 7-20 (ITEY…HLHH), G102, N174, and R199.

Belongs to the TmcAL family.

The protein localises to the cytoplasm. The catalysed reaction is cytidine(34) in elongator tRNA(Met) + acetate + ATP = N(4)-acetylcytidine(34) in elongator tRNA(Met) + AMP + diphosphate. In terms of biological role, catalyzes the formation of N(4)-acetylcytidine (ac(4)C) at the wobble position of elongator tRNA(Met), using acetate and ATP as substrates. First activates an acetate ion to form acetyladenylate (Ac-AMP) and then transfers the acetyl group to tRNA to form ac(4)C34. The polypeptide is tRNA(Met) cytidine acetate ligase (Alkaliphilus metalliredigens (strain QYMF)).